Consider the following 756-residue polypeptide: Protease KEX1 (756 aa).

Positions 1 to 24 (MILSSQLMLALIAVSGYGKAMQVP) are cleaved as a signal peptide. Asparagine 121, asparagine 144, and asparagine 152 each carry an N-linked (GlcNAc...) asparagine glycan. Residues 130–440 (QWHLINPNYP…FGKLDAYNIV (311 aa)) enclose the Peptidase S8 domain. Active-site charge relay system residues include aspartate 164 and histidine 202. Cystine bridges form between cysteine 218/cysteine 365 and cysteine 310/cysteine 340. Serine 373 (charge relay system) is an active-site residue. Asparagine 392 and asparagine 538 each carry an N-linked (GlcNAc...) asparagine glycan. Residues 449–583 (VNPQGWLYLP…RLKMFGETID (135 aa)) enclose the P/Homo B domain. The segment at 599-632 (AEVKSTESKTTTPTAQTSSFTTTSGEETSGANKL) is disordered. The segment covering 606-628 (SKTTTPTAQTSSFTTTSGEETSG) has biased composition (low complexity). Residues 641-661 (LYLAIFVIGAIVIIIYYLFFL) form a helical membrane-spanning segment. The disordered stretch occupies residues 715–756 (EEELSPRESSSNNPFGNESLESFDNSPDHTSNLLGQNSIPNK). Residues 721 to 756 (RESSSNNPFGNESLESFDNSPDHTSNLLGQNSIPNK) are compositionally biased toward polar residues.

It belongs to the peptidase S8 family. Furin subfamily. The cofactor is Ca(2+).

Its subcellular location is the membrane. Probably involved in the processing of the precursor of m1-toxin and alpha-factor. The chain is Protease KEX1 (KEX1) from Kluyveromyces lactis (strain ATCC 8585 / CBS 2359 / DSM 70799 / NBRC 1267 / NRRL Y-1140 / WM37) (Yeast).